Here is a 126-residue protein sequence, read N- to C-terminus: Fluoride-specific ion channel FluC (126 aa).

Helical transmembrane passes span 4–24 (SILA…FLGI), 35–55 (LGTF…VAGF), 68–88 (FVIT…AEVV), and 103–123 (IVIH…TVSL). Gly-75 and Ser-78 together coordinate Na(+).

This sequence belongs to the fluoride channel Fluc/FEX (TC 1.A.43) family.

The protein localises to the cell inner membrane. It catalyses the reaction fluoride(in) = fluoride(out). Na(+) is not transported, but it plays an essential structural role and its presence is essential for fluoride channel function. Fluoride-specific ion channel. Important for reducing fluoride concentration in the cell, thus reducing its toxicity. This chain is Fluoride-specific ion channel FluC, found in Paraburkholderia xenovorans (strain LB400).